Here is a 250-residue protein sequence, read N- to C-terminus: 5-oxoprolinase subunit A (250 aa).

Belongs to the LamB/PxpA family. In terms of assembly, forms a complex composed of PxpA, PxpB and PxpC.

The enzyme catalyses 5-oxo-L-proline + ATP + 2 H2O = L-glutamate + ADP + phosphate + H(+). Its function is as follows. Catalyzes the cleavage of 5-oxoproline to form L-glutamate coupled to the hydrolysis of ATP to ADP and inorganic phosphate. The protein is 5-oxoprolinase subunit A of Pseudomonas fluorescens (strain ATCC BAA-477 / NRRL B-23932 / Pf-5).